We begin with the raw amino-acid sequence, 209 residues long: Holliday junction branch migration complex subunit RuvA (209 aa).

The domain I stretch occupies residues 1–64 (MIGKLKGLVD…EDSIKLYGFA (64 aa)). Residues 65–143 (SETEREWFRL…ALGASLHTLA (79 aa)) form a domain II region. The tract at residues 144–154 (GAGSEGAGVEA) is flexible linker. The interval 155–209 (PASGAVSDAISVLVNLGFGRSQAAVAVAASSKALGSGAGAGDLAKRALQELAQSG) is domain III.

Belongs to the RuvA family. In terms of assembly, homotetramer. Forms an RuvA(8)-RuvB(12)-Holliday junction (HJ) complex. HJ DNA is sandwiched between 2 RuvA tetramers; dsDNA enters through RuvA and exits via RuvB. An RuvB hexamer assembles on each DNA strand where it exits the tetramer. Each RuvB hexamer is contacted by two RuvA subunits (via domain III) on 2 adjacent RuvB subunits; this complex drives branch migration. In the full resolvosome a probable DNA-RuvA(4)-RuvB(12)-RuvC(2) complex forms which resolves the HJ.

It is found in the cytoplasm. In terms of biological role, the RuvA-RuvB-RuvC complex processes Holliday junction (HJ) DNA during genetic recombination and DNA repair, while the RuvA-RuvB complex plays an important role in the rescue of blocked DNA replication forks via replication fork reversal (RFR). RuvA specifically binds to HJ cruciform DNA, conferring on it an open structure. The RuvB hexamer acts as an ATP-dependent pump, pulling dsDNA into and through the RuvAB complex. HJ branch migration allows RuvC to scan DNA until it finds its consensus sequence, where it cleaves and resolves the cruciform DNA. This Methylocella silvestris (strain DSM 15510 / CIP 108128 / LMG 27833 / NCIMB 13906 / BL2) protein is Holliday junction branch migration complex subunit RuvA.